Reading from the N-terminus, the 118-residue chain is Beta-defensin 126 (118 aa).

Residues 1-20 (MKSLLFTLAVFMLLAQLVSG) form the signal peptide. Residues 21 to 63 (SWYVKKCLNDVGICKKKCKPEELHVKNGWAMCGKQRDCCVPAD) form an in vitro binds to LPS, mediates antimicrobial activity and inhibits LPS-mediated inflammation region. 3 disulfides stabilise this stretch: Cys-27-Cys-58, Cys-34-Cys-52, and Cys-38-Cys-59.

Belongs to the beta-defensin family. In terms of assembly, homodimer or homooligomer; disulfide-linked. In terms of processing, O-glycosylated; glycans contain alpha(2,3)-linked sialic acids.

The protein localises to the secreted. In terms of biological role, highly glycosylated atypical beta-defensin involved in several aspects of sperm function. Facilitates sperm transport in the female reproductive tract and contributes to sperm protection against immunodetection; both functions are probably implicating the negative surface charge provided by its O-linked oligosaccharides in the sperm glycocalyx. Involved in binding of sperm to oviductal epithelial cells to form a sperm reservoir until ovulation. Release from the sperm surface during capacitation and ovaluation by an elevation of oviductal fluid pH is unmasking other surface components and allows sperm to penetrate the cumulus matrix and bind to the zona pellucida of the oocyte. In vitro has antimicrobial activity and may inhibit LPS-mediated inflammation. This chain is Beta-defensin 126 (DEFB126), found in Pongo pygmaeus (Bornean orangutan).